A 129-amino-acid polypeptide reads, in one-letter code: Small ribosomal subunit protein bS6 (129 aa).

Positions S100–E129 are disordered. Residues K104–E129 show a composition bias toward basic and acidic residues.

The protein belongs to the bacterial ribosomal protein bS6 family.

In terms of biological role, binds together with bS18 to 16S ribosomal RNA. The polypeptide is Small ribosomal subunit protein bS6 (Vibrio parahaemolyticus serotype O3:K6 (strain RIMD 2210633)).